Reading from the N-terminus, the 246-residue chain is 1-(5-phosphoribosyl)-5-[(5-phosphoribosylamino)methylideneamino] imidazole-4-carboxamide isomerase (246 aa).

The active-site Proton acceptor is Asp10.

It belongs to the HisA/HisF family.

The protein resides in the cytoplasm. It carries out the reaction 1-(5-phospho-beta-D-ribosyl)-5-[(5-phospho-beta-D-ribosylamino)methylideneamino]imidazole-4-carboxamide = 5-[(5-phospho-1-deoxy-D-ribulos-1-ylimino)methylamino]-1-(5-phospho-beta-D-ribosyl)imidazole-4-carboxamide. Its pathway is amino-acid biosynthesis; L-histidine biosynthesis; L-histidine from 5-phospho-alpha-D-ribose 1-diphosphate: step 4/9. In Corynebacterium efficiens (strain DSM 44549 / YS-314 / AJ 12310 / JCM 11189 / NBRC 100395), this protein is 1-(5-phosphoribosyl)-5-[(5-phosphoribosylamino)methylideneamino] imidazole-4-carboxamide isomerase.